Here is a 230-residue protein sequence, read N- to C-terminus: Phosphoribosylformylglycinamidine synthase subunit PurQ (230 aa).

The 225-residue stretch at 2-226 (RVAVIVFPGS…LKTWREQNSV (225 aa)) folds into the Glutamine amidotransferase type-1 domain. The active-site Nucleophile is the C86. Catalysis depends on residues H195 and E197.

Part of the FGAM synthase complex composed of 1 PurL, 1 PurQ and 2 PurS subunits.

Its subcellular location is the cytoplasm. It catalyses the reaction N(2)-formyl-N(1)-(5-phospho-beta-D-ribosyl)glycinamide + L-glutamine + ATP + H2O = 2-formamido-N(1)-(5-O-phospho-beta-D-ribosyl)acetamidine + L-glutamate + ADP + phosphate + H(+). The catalysed reaction is L-glutamine + H2O = L-glutamate + NH4(+). It functions in the pathway purine metabolism; IMP biosynthesis via de novo pathway; 5-amino-1-(5-phospho-D-ribosyl)imidazole from N(2)-formyl-N(1)-(5-phospho-D-ribosyl)glycinamide: step 1/2. In terms of biological role, part of the phosphoribosylformylglycinamidine synthase complex involved in the purines biosynthetic pathway. Catalyzes the ATP-dependent conversion of formylglycinamide ribonucleotide (FGAR) and glutamine to yield formylglycinamidine ribonucleotide (FGAM) and glutamate. The FGAM synthase complex is composed of three subunits. PurQ produces an ammonia molecule by converting glutamine to glutamate. PurL transfers the ammonia molecule to FGAR to form FGAM in an ATP-dependent manner. PurS interacts with PurQ and PurL and is thought to assist in the transfer of the ammonia molecule from PurQ to PurL. The sequence is that of Phosphoribosylformylglycinamidine synthase subunit PurQ from Brevibacillus brevis (strain 47 / JCM 6285 / NBRC 100599).